The sequence spans 240 residues: Uridylate kinase (240 aa).

Position 15 to 18 (15 to 18) interacts with ATP; it reads KLSG. Residues 23-28 are involved in allosteric activation by GTP; sequence GSEGFG. Gly57 lines the UMP pocket. ATP-binding residues include Gly58 and Arg62. Residues Asp77 and 138–145 contribute to the UMP site; that span reads TGNPFFTT. ATP is bound by residues Thr165, Tyr171, and Asp174.

The protein belongs to the UMP kinase family. As to quaternary structure, homohexamer.

It is found in the cytoplasm. It carries out the reaction UMP + ATP = UDP + ADP. It participates in pyrimidine metabolism; CTP biosynthesis via de novo pathway; UDP from UMP (UMPK route): step 1/1. Its activity is regulated as follows. Allosterically activated by GTP. Inhibited by UTP. In terms of biological role, catalyzes the reversible phosphorylation of UMP to UDP. The chain is Uridylate kinase from Photobacterium profundum (strain SS9).